The following is a 77-amino-acid chain: EMBRYO SURROUNDING FACTOR 1-like protein 9 (77 aa).

The first 22 residues, M1–C22, serve as a signal peptide directing secretion. 4 cysteine pairs are disulfide-bonded: C38-C54, C43-C75, C52-C71, and C55-C64.

The protein belongs to the MEG family. In terms of tissue distribution, expressed in flowers.

In Arabidopsis thaliana (Mouse-ear cress), this protein is EMBRYO SURROUNDING FACTOR 1-like protein 9 (ESFL9).